We begin with the raw amino-acid sequence, 308 residues long: Protoheme IX farnesyltransferase (308 aa).

The next 8 membrane-spanning stretches (helical) occupy residues Leu20 to Ile40, Ala50 to Ala70, Asn102 to Thr122, Leu124 to Trp144, Thr149 to Ser169, Ala170 to Thr190, Leu227 to Gly249, and Tyr288 to His308.

It belongs to the UbiA prenyltransferase family. Protoheme IX farnesyltransferase subfamily.

The protein resides in the cell membrane. The enzyme catalyses heme b + (2E,6E)-farnesyl diphosphate + H2O = Fe(II)-heme o + diphosphate. It participates in porphyrin-containing compound metabolism; heme O biosynthesis; heme O from protoheme: step 1/1. In terms of biological role, converts heme B (protoheme IX) to heme O by substitution of the vinyl group on carbon 2 of heme B porphyrin ring with a hydroxyethyl farnesyl side group. The protein is Protoheme IX farnesyltransferase of Mycobacterium bovis (strain BCG / Pasteur 1173P2).